Here is a 105-residue protein sequence, read N- to C-terminus: MTASFKAVMIGGVRWYQQRISANTPPCCKYYPTCSNYAIEALERYGAFKGGVLAVLRLLRCRPWSRGGIDDVPQRYSIFYRFSWSKAHEEPRLTPLATTQREAQR.

The protein belongs to the UPF0161 family.

It is found in the cell membrane. Functionally, could be involved in insertion of integral membrane proteins into the membrane. In Bifidobacterium longum subsp. infantis (strain ATCC 15697 / DSM 20088 / JCM 1222 / NCTC 11817 / S12), this protein is Putative membrane protein insertion efficiency factor.